The sequence spans 319 residues: Molybdenum cofactor biosynthesis bifunctional protein (319 aa).

The interval 1-145 (MIDVGDKAVT…GKSGHWQRPA (145 aa)) is molybdenum cofactor biosynthesis protein C. Residues 61 to 63 (LCH) and 99 to 100 (ME) each bind substrate. Asp-114 is an active-site residue. Positions 146–319 (IAPDVAPTGA…KGADHGTVKG (174 aa)) are molybdenum cofactor biosynthesis protein B.

It in the N-terminal section; belongs to the MoaC family. The protein in the C-terminal section; belongs to the MoaB/Mog family.

It carries out the reaction (8S)-3',8-cyclo-7,8-dihydroguanosine 5'-triphosphate = cyclic pyranopterin phosphate + diphosphate. It participates in cofactor biosynthesis; molybdopterin biosynthesis. Catalyzes the conversion of (8S)-3',8-cyclo-7,8-dihydroguanosine 5'-triphosphate to cyclic pyranopterin monophosphate (cPMP). This chain is Molybdenum cofactor biosynthesis bifunctional protein (moaCB), found in Synechococcus elongatus (strain ATCC 33912 / PCC 7942 / FACHB-805) (Anacystis nidulans R2).